Consider the following 102-residue polypeptide: Antitoxin VapB46 (102 aa).

The protein belongs to the phD/YefM antitoxin family.

In terms of biological role, antitoxin component of a type II toxin-antitoxin (TA) system. Neutralizes the effect of cognate toxin VapC46. The sequence is that of Antitoxin VapB46 (vapB46) from Mycobacterium tuberculosis (strain CDC 1551 / Oshkosh).